Reading from the N-terminus, the 333-residue chain is Protein-methionine-sulfoxide reductase catalytic subunit MsrP (333 aa).

Positions 1–43 (MHKHRKPTEADVTPESLFYQRRRVLKALGISAAALSLPLSAQA) form a signal peptide, tat-type signal. Mo-molybdopterin contacts are provided by residues N87, 90-91 (YE), C145, T180, N232, R237, and 248-250 (NIK).

It belongs to the MsrP family. Heterodimer of a catalytic subunit (MsrP) and a heme-binding subunit (MsrQ). The cofactor is Mo-molybdopterin. Post-translationally, predicted to be exported by the Tat system. The position of the signal peptide cleavage has not been experimentally proven.

The protein localises to the periplasm. The catalysed reaction is L-methionyl-[protein] + a quinone + H2O = L-methionyl-(S)-S-oxide-[protein] + a quinol. The enzyme catalyses L-methionyl-[protein] + a quinone + H2O = L-methionyl-(R)-S-oxide-[protein] + a quinol. Part of the MsrPQ system that repairs oxidized periplasmic proteins containing methionine sulfoxide residues (Met-O), using respiratory chain electrons. Thus protects these proteins from oxidative-stress damage caused by reactive species of oxygen and chlorine generated by the host defense mechanisms. MsrPQ is essential for the maintenance of envelope integrity under bleach stress, rescuing a wide series of structurally unrelated periplasmic proteins from methionine oxidation. The catalytic subunit MsrP is non-stereospecific, being able to reduce both (R-) and (S-) diastereoisomers of methionine sulfoxide. This is Protein-methionine-sulfoxide reductase catalytic subunit MsrP from Pectobacterium atrosepticum (strain SCRI 1043 / ATCC BAA-672) (Erwinia carotovora subsp. atroseptica).